A 796-amino-acid chain; its full sequence is Potassium transporter 10 (796 aa).

A disordered region spans residues 1-30 (MAGRVESSIGGGEIDEEGDERGSMWDLDQS). At 1–58 (MAGRVESSIGGGEIDEEGDERGSMWDLDQSLDQPMDEEAGRLRNMYREKKFSAFLLLQ) the chain is on the cytoplasmic side. The chain crosses the membrane as a helical span at residues 59–79 (LSFQSLGVVYGDLGTSPLYVF). Over 80–95 (YNTFPRGIKDPEDIIG) the chain is Extracellular. Residues 96–116 (ALSLIIYSLTLIPLLKYVFVV) traverse the membrane as a helical segment. Topologically, residues 117–184 (CKANDNGQGG…ENGTSRKNAL (68 aa)) are cytoplasmic. Residues 185–205 (LILVLVGTCMVIGDGILTPAI) form a helical membrane-spanning segment. The Extracellular portion of the chain corresponds to 206-217 (SVLSAAGGLRVN). The chain crosses the membrane as a helical span at residues 218 to 238 (LPHINNGIVVVVAVVILVSLF). At 239 to 248 (SVQHYGTDRV) the chain is on the cytoplasmic side. A helical membrane pass occupies residues 249 to 269 (GWLFAPIVFLWFLFIASIGMF). Over 270 to 298 (NIWKHDPSVLKAFSPVYIFRYFKRGGQDR) the chain is Extracellular. A helical transmembrane segment spans residues 299-319 (WTSLGGIMLSITGIEALFADL). Residues 320–321 (SH) lie on the Cytoplasmic side of the membrane. Residues 322–342 (FPVSAVQFAFTVIVFPCLLLA) form a helical membrane-spanning segment. The Extracellular segment spans residues 343-368 (YSGQAAYLRKYPHHVEDAFYQSIPKR). The helical transmembrane segment at 369-389 (VYWPMFIIATAAAIVASQATI) threads the bilayer. The Cytoplasmic portion of the chain corresponds to 390-420 (SATFSLIKQALAHGCFPRVKVVHTSRKFLGQ). The helical transmembrane segment at 421-441 (IYVPDINWILMILCIAVTAGF) threads the bilayer. Topologically, residues 442–453 (KNQNQIGNAYGT) are extracellular. The helical transmembrane segment at 454–474 (AVVIVMLVTTLLMMLIMILVW) threads the bilayer. The Cytoplasmic portion of the chain corresponds to 475 to 480 (RCHWVL). Residues 481 to 501 (VLLFTLLSLVVECTYFSAVLF) traverse the membrane as a helical segment. Residues 502 to 505 (KVNQ) lie on the Extracellular side of the membrane. Residues 506–526 (GGWVPLVIAAAFLVIMYVWHY) traverse the membrane as a helical segment. Over 527 to 796 (GTLKRYEFEM…LLNVGQIFYV (270 aa)) the chain is Cytoplasmic.

Belongs to the HAK/KUP transporter (TC 2.A.72.3) family.

The protein localises to the cell membrane. In terms of biological role, putative potassium transporter. The protein is Potassium transporter 10 (POT10) of Arabidopsis thaliana (Mouse-ear cress).